Here is a 453-residue protein sequence, read N- to C-terminus: DDB1- and CUL4-associated factor 12 (453 aa).

A compositionally biased stretch (basic residues) spans 1–12; sequence MARKAVSRKRKA. The tract at residues 1–34 is disordered; that stretch reads MARKAVSRKRKASASPGAGSDAQGPQFGWDHSLH. The required for nuclear location and interaction with MOV10 stretch occupies residues 1 to 38; it reads MARKAVSRKRKASASPGAGSDAQGPQFGWDHSLHKRKR. Ser15 carries the post-translational modification Phosphoserine. WD repeat units lie at residues 138 to 178, 182 to 220, 250 to 289, and 338 to 375; these read QQGC…PVCV, GHKDWIFSIAWINDTMAVSGSRDGSMGLWEVTDDVLTKS, PDNCKVRALAFNNKNKELGAVSLDGYFHLWKAENTLSKLL, and ERGSGIRSVSFYEHIITVGTGQGSLLFYDIRAQRFLEE.

Belongs to the WD repeat DCAF12 family. Component of the DCX(DCAF12) E3 ubiquitin ligase complex, at least composed of CUL4 (CUL4A or CUL4B), DDB1, DCAF12 and RBX1.

The protein resides in the cytoplasm. It is found in the cytoskeleton. Its subcellular location is the microtubule organizing center. It localises to the centrosome. The protein localises to the nucleus. It functions in the pathway protein modification; protein ubiquitination. Substrate-recognition component of a DCX (DDB1-CUL4-X-box) E3 ubiquitin-protein ligase complex of the DesCEND (destruction via C-end degrons) pathway, which recognizes a C-degron located at the extreme C terminus of target proteins, leading to their ubiquitination and degradation. The C-degron recognized by the DesCEND pathway is usually a motif of less than ten residues and can be present in full-length proteins, truncated proteins or proteolytically cleaved forms. The DCX(DCAF12) complex specifically recognizes proteins with a diglutamate (Glu-Glu) at the C-terminus, such as MAGEA3, MAGEA6 and CCT5, leading to their ubiquitination and degradation. Ubiquitination of MAGEA3, MAGEA6 by DCX(DCAF12) complex is required for starvation-induced autophagy. Also directly recognizes the C-terminal glutamate-leucine (Glu-Leu) degron as an alternative degron in proteins such as MOV10, leading to their ubiquitination and degradation. Controls the protein level of MOV10 during spermatogenesis and in T cells, especially after their activation. The chain is DDB1- and CUL4-associated factor 12 from Mus musculus (Mouse).